A 294-amino-acid chain; its full sequence is Nucleotide-binding protein CLL_A3342 (294 aa).

8 to 15 (GLSGAGKT) contributes to the ATP binding site. Position 59-62 (59-62 (DIRG)) interacts with GTP.

Belongs to the RapZ-like family.

Functionally, displays ATPase and GTPase activities. This is Nucleotide-binding protein CLL_A3342 from Clostridium botulinum (strain Eklund 17B / Type B).